The chain runs to 413 residues: MFKSFDGLKLSNSELEGRYIIANRDIDIGESILKCKSYFAVTCEDFKKNSCYNCIKLIKSPSPQQVPRCFGCNEVWYCSEKCKQDNQAKHQHYECAFFNNIKSPKLIQNSKLDFDSYSEIRIILGLLSRYYQDKLLNNKFNSSIIINNQQDDEEDFIKDTLDGVLDLVENDINEETNSVAKEYIDNIIEYIINILKLTINNNSNDNNNNNNNNNNNNNNNNNNNNNNNNNNNNNIEELIKLIRPLIQKVRCNQFGIWTKNDKCIGMAVSPSSSYFNHSCIPNCESVRDGSDMTFKSLFPIKKGDQINISYLALDKSTKRRRDYLKFGYYFHCQCPRCNSTDIDPTGKLEDSLDNWISKFYCHQKKCTGLYYSKLKLSLQSLTNIDNHEIQLSCSTCNDQLIVNSNFYLNKPNY.

Positions 6-311 constitute an SET domain; it reads DGLKLSNSEL…KGDQINISYL (306 aa). An MYND-type zinc finger spans residues 51 to 95; the sequence is CYNCIKLIKSPSPQQVPRCFGCNEVWYCSEKCKQDNQAKHQHYEC. Residues 205–232 form a disordered region; it reads DNNNNNNNNNNNNNNNNNNNNNNNNNNN. Residues 216 to 243 adopt a coiled-coil conformation; that stretch reads NNNNNNNNNNNNNNNNNNNIEELIKLIR.

Belongs to the class V-like SAM-binding methyltransferase superfamily.

Probable methyltransferase. The sequence is that of SET and MYND domain-containing protein DDB_G0273591 from Dictyostelium discoideum (Social amoeba).